Reading from the N-terminus, the 138-residue chain is Histone H2B.3 (138 aa).

2 stretches are compositionally biased toward basic and acidic residues: residues 1-18 (MAPK…EKTT) and 26-38 (EKRP…GGDK). Residues 1–46 (MAPKAEKKPVAEKAEKTTAAKKTKAEKRPPASKEGGDKKGKKKSKK) are disordered. 2 positions are modified to N6-acetyllysine: Lys-7 and Lys-27. Lys-134 is covalently cross-linked (Glycyl lysine isopeptide (Lys-Gly) (interchain with G-Cter in ubiquitin)).

Belongs to the histone H2B family. The nucleosome is a histone octamer containing two molecules each of H2A, H2B, H3 and H4 assembled in one H3-H4 heterotetramer and two H2A-H2B heterodimers. The octamer wraps approximately 147 bp of DNA. In terms of processing, can be acetylated to form H2BK6ac and H2BK33ac. Post-translationally, monoubiquitinated to form H2BK143ub1; may give a specific tag for epigenetic transcriptional activation.

It localises to the nucleus. It is found in the chromosome. In terms of biological role, core component of nucleosome. Nucleosomes wrap and compact DNA into chromatin, limiting DNA accessibility to the cellular machineries which require DNA as a template. Histones thereby play a central role in transcription regulation, DNA repair, DNA replication and chromosomal stability. DNA accessibility is regulated via a complex set of post-translational modifications of histones, also called histone code, and nucleosome remodeling. In Triticum aestivum (Wheat), this protein is Histone H2B.3.